Reading from the N-terminus, the 242-residue chain is Orotidine 5'-phosphate decarboxylase (242 aa).

Substrate-binding positions include aspartate 16, lysine 37, aspartate 64–threonine 73, threonine 128, arginine 190, glutamine 199, glycine 219, and arginine 220. Residue lysine 66 is the Proton donor of the active site.

Belongs to the OMP decarboxylase family. Type 1 subfamily. As to quaternary structure, homodimer.

The catalysed reaction is orotidine 5'-phosphate + H(+) = UMP + CO2. Its pathway is pyrimidine metabolism; UMP biosynthesis via de novo pathway; UMP from orotate: step 2/2. Its function is as follows. Catalyzes the decarboxylation of orotidine 5'-monophosphate (OMP) to uridine 5'-monophosphate (UMP). In Prochlorococcus marinus (strain AS9601), this protein is Orotidine 5'-phosphate decarboxylase.